A 134-amino-acid chain; its full sequence is uncharacterized protein (134 aa).

The next 2 helical transmembrane spans lie at 49-69 (VAVP…SLDV) and 71-91 (LSMT…LNKV).

It localises to the cell membrane. This is an uncharacterized protein from Mycobacterium tuberculosis (strain ATCC 25618 / H37Rv).